We begin with the raw amino-acid sequence, 144 residues long: Large ribosomal subunit protein uL16 (144 aa).

This sequence belongs to the universal ribosomal protein uL16 family. Part of the 50S ribosomal subunit.

In terms of biological role, binds 23S rRNA and is also seen to make contacts with the A and possibly P site tRNAs. This chain is Large ribosomal subunit protein uL16, found in Listeria innocua serovar 6a (strain ATCC BAA-680 / CLIP 11262).